The following is a 328-amino-acid chain: Cytochrome c biogenesis protein CcsA (328 aa).

Transmembrane regions (helical) follow at residues 12–32, 45–65, 72–92, 100–120, 145–165, 234–254, 263–283, and 296–316; these read HISF…LLLG, GMII…IFSG, LYES…VLCL, FNTI…SGLL, MILG…ILVI, TISL…VWAN, WDPK…YLHI, and IVAS…NLLG.

The protein belongs to the CcmF/CycK/Ccl1/NrfE/CcsA family. May interact with Ccs1.

The protein localises to the plastid. It is found in the chloroplast thylakoid membrane. Required during biogenesis of c-type cytochromes (cytochrome c6 and cytochrome f) at the step of heme attachment. The polypeptide is Cytochrome c biogenesis protein CcsA (Phaseolus vulgaris (Kidney bean)).